We begin with the raw amino-acid sequence, 104 residues long: Cell division protein FtsL (104 aa).

The Cytoplasmic segment spans residues 1–20; it reads MSKPSLTLPRIVLHDLWQHK. A helical membrane pass occupies residues 21–43; it reads WILLLALLVLSNAVAVVYTSHVS. At 44-104 the chain is on the periplasmic side; that stretch reads RKLTTEWDQL…PSEEIVVKVP (61 aa).

This sequence belongs to the FtsL family. In terms of assembly, part of a complex composed of FtsB, FtsL and FtsQ.

It is found in the cell inner membrane. In terms of biological role, essential cell division protein. May link together the upstream cell division proteins, which are predominantly cytoplasmic, with the downstream cell division proteins, which are predominantly periplasmic. The chain is Cell division protein FtsL from Shewanella oneidensis (strain ATCC 700550 / JCM 31522 / CIP 106686 / LMG 19005 / NCIMB 14063 / MR-1).